A 274-amino-acid chain; its full sequence is MNYKPRTKVIAGNWKMYKCKDEALEFIQKVSLQVPDQTQVQTLIFPQLTLLDSLAQLQGTNLQVGAQNMFYESEGAFTGEVSPQNLLSLGVKHVLLGHSERRTFFGETDQTVNLKLLSALKHKLVPTVCVGESLLTKENNQTQVFLDQQLTNIFAGVPEEALQNIIIAYEPVWAIGTGKSATPQDANKVIEQIRDKVTALYSSQASCAMRIIYGGSVSVANIKTILEQPAIDGILAGKASLQTEDFLFFAQIASKQALASTKDIFQKNDCPFCC.

13-15 (NWK) is a binding site for substrate. H98 acts as the Electrophile in catalysis. E170 serves as the catalytic Proton acceptor. Substrate-binding residues include G176 and S216.

The protein belongs to the triosephosphate isomerase family. In terms of assembly, homodimer.

It localises to the cytoplasm. The catalysed reaction is D-glyceraldehyde 3-phosphate = dihydroxyacetone phosphate. It functions in the pathway carbohydrate biosynthesis; gluconeogenesis. The protein operates within carbohydrate degradation; glycolysis; D-glyceraldehyde 3-phosphate from glycerone phosphate: step 1/1. In terms of biological role, involved in the gluconeogenesis. Catalyzes stereospecifically the conversion of dihydroxyacetone phosphate (DHAP) to D-glyceraldehyde-3-phosphate (G3P). In Onion yellows phytoplasma (strain OY-M), this protein is Triosephosphate isomerase.